The sequence spans 405 residues: Na(+)/H(+) antiporter NhaA 1 (405 aa).

Transmembrane regions (helical) follow at residues Phe-20–Val-40, Leu-68–Val-88, Leu-105–Val-125, Gly-134–Gly-154, Leu-163–Phe-183, Ala-186–Met-206, Ile-214–His-234, Gly-263–Val-283, Ile-301–Val-321, Trp-334–Ile-354, and Ile-371–Thr-391.

This sequence belongs to the NhaA Na(+)/H(+) (TC 2.A.33) antiporter family.

The protein localises to the cell inner membrane. The catalysed reaction is Na(+)(in) + 2 H(+)(out) = Na(+)(out) + 2 H(+)(in). Na(+)/H(+) antiporter that extrudes sodium in exchange for external protons. The polypeptide is Na(+)/H(+) antiporter NhaA 1 (Erythrobacter litoralis (strain HTCC2594)).